The sequence spans 196 residues: Nucleoside triphosphate pyrophosphatase (196 aa).

The Proton acceptor role is filled by aspartate 73.

It belongs to the Maf family. It depends on a divalent metal cation as a cofactor.

Its subcellular location is the cytoplasm. It carries out the reaction a ribonucleoside 5'-triphosphate + H2O = a ribonucleoside 5'-phosphate + diphosphate + H(+). The catalysed reaction is a 2'-deoxyribonucleoside 5'-triphosphate + H2O = a 2'-deoxyribonucleoside 5'-phosphate + diphosphate + H(+). Its function is as follows. Nucleoside triphosphate pyrophosphatase. May have a dual role in cell division arrest and in preventing the incorporation of modified nucleotides into cellular nucleic acids. The protein is Nucleoside triphosphate pyrophosphatase of Maricaulis maris (strain MCS10) (Caulobacter maris).